The primary structure comprises 86 residues: Large ribosomal subunit protein uL23 (86 aa).

This sequence belongs to the universal ribosomal protein uL23 family. Part of the 50S ribosomal subunit. Contacts protein L29.

Functionally, binds to 23S rRNA. One of the proteins that surrounds the polypeptide exit tunnel on the outside of the ribosome. The chain is Large ribosomal subunit protein uL23 from Methanocaldococcus jannaschii (strain ATCC 43067 / DSM 2661 / JAL-1 / JCM 10045 / NBRC 100440) (Methanococcus jannaschii).